A 174-amino-acid chain; its full sequence is Micrococcal nuclease (174 aa).

Residues 1–23 (MKSALAALRAVAAAVVLIVSVPA) form the signal peptide. Catalysis depends on residues Arg52, Glu60, and Arg94.

Belongs to the thermonuclease family.

The enzyme catalyses Endonucleolytic cleavage to nucleoside 3'-phosphates and 3'-phosphooligonucleotide end-products.. The polypeptide is Micrococcal nuclease (nuc) (Shigella flexneri).